The following is an 861-amino-acid chain: Leucine--tRNA ligase (861 aa).

The 'HIGH' region motif lies at 42-52 (PYPSGKLHMGH). The short motif at 620–624 (KMSKS) is the 'KMSKS' region element. K623 contributes to the ATP binding site.

The protein belongs to the class-I aminoacyl-tRNA synthetase family.

Its subcellular location is the cytoplasm. The enzyme catalyses tRNA(Leu) + L-leucine + ATP = L-leucyl-tRNA(Leu) + AMP + diphosphate. The sequence is that of Leucine--tRNA ligase from Marinobacter nauticus (strain ATCC 700491 / DSM 11845 / VT8) (Marinobacter aquaeolei).